A 94-amino-acid chain; its full sequence is Co-chaperonin GroES (94 aa).

Belongs to the GroES chaperonin family. Heptamer of 7 subunits arranged in a ring. Interacts with the chaperonin GroEL.

It is found in the cytoplasm. Functionally, together with the chaperonin GroEL, plays an essential role in assisting protein folding. The GroEL-GroES system forms a nano-cage that allows encapsulation of the non-native substrate proteins and provides a physical environment optimized to promote and accelerate protein folding. GroES binds to the apical surface of the GroEL ring, thereby capping the opening of the GroEL channel. The chain is Co-chaperonin GroES from Heliobacterium modesticaldum (strain ATCC 51547 / Ice1).